Reading from the N-terminus, the 243-residue chain is Vesicle-associated membrane protein-associated protein B/C (243 aa).

Ala-2 is subject to N-acetylalanine. The Cytoplasmic portion of the chain corresponds to 2–222 (AKVEQVLSLE…PTGKEEGLST (221 aa)). In terms of domain architecture, MSP spans 7-124 (VLSLEPQHEL…MDSKLRCVFE (118 aa)). At Ser-146 the chain carries Phosphoserine. Residue Lys-147 forms a Glycyl lysine isopeptide (Lys-Gly) (interchain with G-Cter in SUMO1) linkage. A Phosphothreonine modification is found at Thr-150. Phosphoserine occurs at positions 156, 158, 159, 160, and 206. The stretch at 159 to 196 (SSLDDTEVKKVMEECKRLQGEVQRLREENKQFKEEDGL) forms a coiled coil. A helical; Anchor for type IV membrane protein transmembrane segment spans residues 223-243 (RLLALVVLFFIVGVIIGKIAL).

It belongs to the VAMP-associated protein (VAP) (TC 9.B.17) family. In terms of assembly, homodimer, and heterodimer with VAPA. Interacts with VAMP1 and VAMP2. Interacts (via MSP domain) with ZFYVE27. Interacts with RMDN3. Interacts with KIF5A in a ZFYVE27-dependent manner. Interacts (via MSP domain) with STARD3 (via phospho-FFAT motif). Interacts with STARD3NL (via FFAT motif). Interacts with CERT1. Interacts with PLEKHA3 and SACM1L to form a ternary complex. Interacts with VPS13A (via FFAT motif). Interacts with RB1CC1 (via phosphorylated FFAT motif), MIGA2 (via phosphorylated FFAT motif), RMDN3 (via phosphorylated FFAT motif), OSBPL1A (via FFAT motif), KCNB1 (via phosphorylated FFAT motif) and KCNB2 (via phosphorylated FFAT motif). Interacts (via MSP domain) with WDR44 (via FFAT motif); the interactions connect the endoplasmic reticulum (ER) with the endosomal tubule. As to quaternary structure, (Microbial infection) Interacts (via MSP domain) with hepatitis C virus (HCV) non-structural protein 5A (via disordered domain D3). Interacts with HCV RNA-directed RNA polymerase. As to expression, ubiquitous. Isoform 1 predominates.

It localises to the endoplasmic reticulum membrane. Functionally, endoplasmic reticulum (ER)-anchored protein that mediates the formation of contact sites between the ER and endosomes via interaction with FFAT motif-containing proteins such as STARD3 or WDR44. Interacts with STARD3 in a FFAT motif phosphorylation dependent manner. Via interaction with WDR44 participates in neosynthesized protein export. Participates in the endoplasmic reticulum unfolded protein response (UPR) by inducing ERN1/IRE1 activity. Involved in cellular calcium homeostasis regulation. The protein is Vesicle-associated membrane protein-associated protein B/C of Homo sapiens (Human).